We begin with the raw amino-acid sequence, 138 residues long: Cysteine desulfuration protein SufE (138 aa).

The active-site Cysteine persulfide intermediate is the Cys-51.

Belongs to the SufE family. In terms of assembly, homodimer. Interacts with SufS.

The protein localises to the cytoplasm. Its pathway is cofactor biosynthesis; iron-sulfur cluster biosynthesis. Its function is as follows. Participates in cysteine desulfuration mediated by SufS. Cysteine desulfuration mobilizes sulfur from L-cysteine to yield L-alanine and constitutes an essential step in sulfur metabolism for biosynthesis of a variety of sulfur-containing biomolecules. Functions as a sulfur acceptor for SufS, by mediating the direct transfer of the sulfur atom from the S-sulfanylcysteine of SufS, an intermediate product of cysteine desulfuration process. The sequence is that of Cysteine desulfuration protein SufE from Escherichia coli O157:H7.